Consider the following 99-residue polypeptide: Integration host factor subunit alpha (99 aa).

The protein belongs to the bacterial histone-like protein family. In terms of assembly, heterodimer of an alpha and a beta chain.

Functionally, this protein is one of the two subunits of integration host factor, a specific DNA-binding protein that functions in genetic recombination as well as in transcriptional and translational control. This chain is Integration host factor subunit alpha, found in Psychrobacter arcticus (strain DSM 17307 / VKM B-2377 / 273-4).